Reading from the N-terminus, the 316-residue chain is MNMLKTTMLLAALTALFMALGFTIGGTGGAMIALVVAAGMNLFTFWNADSIVLRMHGAREVDAQNCPEFVGLVAGLARRANLPMPRVYIIDSEHPNAFATGRNPENAAVAATTGLLAILNRDEIEGVMAHELAHVRNRDTLIMTMTATIAGAISMLANFGMFFGAGRRDGGQVLATILAVFVAPFAAMIVQMAISRAREYGADRGGAEISGKPQALASALAKLANGAARIPNPVVERNPAAAALYIVPGMKRDGDSLFATHPATENRIAHLEAIANEMGVSSPSPNFAALSERRGSVSSVPRTRRRSSALDPNGRG.

Residues 16 to 36 form a helical membrane-spanning segment; it reads LFMALGFTIGGTGGAMIALVV. Residue histidine 130 coordinates Zn(2+). Glutamate 131 is an active-site residue. Histidine 134 serves as a coordination point for Zn(2+). Helical transmembrane passes span 145-165 and 174-194; these read MTAT…FFGA and LATI…QMAI. Glutamate 199 is a Zn(2+) binding site. Residues 285 to 316 form a disordered region; the sequence is PNFAALSERRGSVSSVPRTRRRSSALDPNGRG.

This sequence belongs to the peptidase M48B family. Requires Zn(2+) as cofactor.

Its subcellular location is the cell inner membrane. The chain is Protease HtpX homolog from Rhizorhabdus wittichii (strain DSM 6014 / CCUG 31198 / JCM 15750 / NBRC 105917 / EY 4224 / RW1) (Sphingomonas wittichii).